A 561-amino-acid chain; its full sequence is Carboxylesterase 1F (561 aa).

The first 17 residues, 1 to 17 (MFLSTLFLVSLATCVIC), serve as a signal peptide directing secretion. Cysteines 87 and 116 form a disulfide. The Acyl-ester intermediate role is filled by Ser221. Cys273 and Cys284 form a disulfide bridge. Residues Glu353 and His466 each act as charge relay system in the active site. The short motif at 558–561 (HNEL) is the Prevents secretion from ER element.

This sequence belongs to the type-B carboxylesterase/lipase family. Expressed in liver, white and brown adipose tissue, kidney, intestine, adrenal, heart and ovary. Not detected in muscle, lung, testis, brain and spleen.

It localises to the lipid droplet. It is found in the cytoplasm. The protein localises to the cytosol. Its subcellular location is the endoplasmic reticulum. The protein resides in the microsome. It carries out the reaction a carboxylic ester + H2O = an alcohol + a carboxylate + H(+). It catalyses the reaction all-trans-retinyl hexadecanoate + H2O = all-trans-retinol + hexadecanoate + H(+). Functionally, involved in the detoxification of xenobiotics and in the activation of ester and amide prodrugs. Hydrolyzes retinyl esters. Hydrolyzes p-nitrophenyl butyrate (PNPB), triacylglycerol and monoacylglycerol. Shows higher activity against PNPB, a short-chain fatty acid ester, than against triolein, a long-chain fatty acid ester. Shows no detectable activity against diacylglycerol, cholesterol ester or phospholipids. May play a role in adipocyte lipolysis. The chain is Carboxylesterase 1F from Mus musculus (Mouse).